Consider the following 772-residue polypeptide: Magnetosome formation protease MamE (772 aa).

Topologically, residues 1–21 are cytoplasmic; that stretch reads MTMFNGDVEDGGRSNVSCGKD. The helical transmembrane segment at 22–42 threads the bilayer; it reads LKRYLMLMGVVALVVLFGAFI. Over 43 to 772 the chain is Lumenal; that stretch reads YRQSSGGLRL…RNGQEFWIVL (730 aa). Active-site charge relay system residues include H187, D220, and S296. Residues 374–397 carry the MCR (magnetochrome) 1 motif; sequence IAAGTPSPHVDGRQNMDCSNCHDI. Residues C391, C394, H395, C437, C440, H441, C488, C491, and H492 each coordinate heme. 2 short sequence motifs (MCR) span residues 420 to 443 and 470 to 494; these read IPANAVSPHTDGRQNMTCNTCHQF and AIRANAANPHTDGRQNMNCASCHQI. Positions 445–558 constitute a Cytochrome c domain; it reads GGAAAGPIAF…ALTPLTQRLG (114 aa). 2 consecutive PDZ domains span residues 522 to 626 and 696 to 765; these read AINI…LRAG and GATP…HRNG.

The protein in the N-terminal section; belongs to the peptidase S1C family. In terms of assembly, might interact with MamB via PDZ1. Heme is required as a cofactor. In terms of processing, the protein isolated from magnetosome membranes has a molecular weight of about 36.3 kDa, probably due to C-terminal cleavage. Subject to autocatalytic cleavage; cleavage also requires MamO; these may be the same event.

The protein resides in the magnetosome membrane. In terms of biological role, acts at 2 distinct steps of magnetosome formation; required for correct localization of proteins to the magnetosome while the protease activity is required for maturation of small magnetite crystals into larger, functional ones. Probably cleaves at least itself, MamO and MamP; cleavage requires the putative transprot domain of MamO. Involved in localization of some proteins (at least MamA, MamC, MamF, MamI and MamJ) to the magnetosome. One of 7 genes (mamLQBIEMO) able to induce magnetosome membrane biogenesis; coexpression of mamLQRBIEMO in a deletion of the 17 gene mamAB operon restores magnetosome vesicle formation but not magnetite biosynthesis. The protein is Magnetosome formation protease MamE of Magnetospirillum gryphiswaldense (strain DSM 6361 / JCM 21280 / NBRC 15271 / MSR-1).